Consider the following 476-residue polypeptide: PRAME family member 5 (476 aa).

One copy of the LRR 1; degenerate repeat lies at 97 to 124 (RWKLQVLDLQDVCENFWMVWSEAMAHGC). One copy of the LRR 2; degenerate repeat lies at 179–203 (HLCCKKLKILGMPFRNIRSILKMVN). One copy of the LRR 3; degenerate repeat lies at 204–230 (LDCIQEVEVNCKWVLPILTQFTPYLGH). The LRR 4; degenerate repeat unit spans residues 231-266 (MRNLQKLVLSHMDVSRYVSPEQKKEIVTQFTTQFLK). 5 LRR repeats span residues 267 to 292 (LCCLQKLSMNSVSFLEGHLDQLLSCL), 293 to 324 (KTSLKVLTITNCVLLESDLKHLSQCPSISQLK), 325 to 345 (TLDLSGIRLTNYSLVPLQILL), 349 to 376 (AATLEYLDLDDCGIIDSQVNAILPALSR), and 377 to 401 (CFELNTFSFCGNPISMATLENLLSH).

It belongs to the PRAME family.

This chain is PRAME family member 5, found in Homo sapiens (Human).